Here is a 136-residue protein sequence, read N- to C-terminus: ATP synthase epsilon chain (136 aa).

A disordered region spans residues 100–120 (QGALEEANRGEDKPNQLKASN). Residues 105-114 (EANRGEDKPN) show a composition bias toward basic and acidic residues.

The protein belongs to the ATPase epsilon chain family. In terms of assembly, F-type ATPases have 2 components, CF(1) - the catalytic core - and CF(0) - the membrane proton channel. CF(1) has five subunits: alpha(3), beta(3), gamma(1), delta(1), epsilon(1). CF(0) has three main subunits: a, b and c.

The protein resides in the cellular thylakoid membrane. In terms of biological role, produces ATP from ADP in the presence of a proton gradient across the membrane. The protein is ATP synthase epsilon chain (atpC) of Synechocystis sp. (strain ATCC 27184 / PCC 6803 / Kazusa).